The primary structure comprises 495 residues: Tubulin epsilon and delta complex protein 1 (495 aa).

Positions 355-387 (GGELDLVVRELQALEEELREAAERRRAAWEAKA) form a coiled coil. The segment at 417-440 (CWERDGGPAQPHGPHRLVRREDGA) is disordered. Residues 452 to 480 (IRTLRSQEACLEAVLRRLQGQCRQELARL) adopt a coiled-coil conformation.

In terms of assembly, interacts with TEDC2. Found in a complex with TEDC1, TEDC2, TUBE1 and TUBD1.

The protein localises to the cell projection. It localises to the cilium. The protein resides in the cytoplasm. Its subcellular location is the cytoskeleton. It is found in the microtubule organizing center. The protein localises to the centrosome. It localises to the centriole. Its function is as follows. Acts as a positive regulator of ciliary hedgehog signaling. Required for centriole stability. May play a role in counteracting perturbation of actin filaments, such as after treatment with the actin depolymerizing microbial metabolite Chivosazole F. This Homo sapiens (Human) protein is Tubulin epsilon and delta complex protein 1.